The following is a 94-amino-acid chain: Small ribosomal subunit protein uS19 (94 aa).

The protein belongs to the universal ribosomal protein uS19 family.

In terms of biological role, protein S19 forms a complex with S13 that binds strongly to the 16S ribosomal RNA. The protein is Small ribosomal subunit protein uS19 of Clostridium novyi (strain NT).